The chain runs to 179 residues: Large ribosomal subunit protein uL5 (179 aa).

The protein belongs to the universal ribosomal protein uL5 family. As to quaternary structure, part of the 50S ribosomal subunit; part of the 5S rRNA/L5/L18/L25 subcomplex. Contacts the 5S rRNA and the P site tRNA. Forms a bridge to the 30S subunit in the 70S ribosome.

In terms of biological role, this is one of the proteins that bind and probably mediate the attachment of the 5S RNA into the large ribosomal subunit, where it forms part of the central protuberance. In the 70S ribosome it contacts protein S13 of the 30S subunit (bridge B1b), connecting the 2 subunits; this bridge is implicated in subunit movement. Contacts the P site tRNA; the 5S rRNA and some of its associated proteins might help stabilize positioning of ribosome-bound tRNAs. This is Large ribosomal subunit protein uL5 from Yersinia enterocolitica serotype O:8 / biotype 1B (strain NCTC 13174 / 8081).